The chain runs to 63 residues: Large ribosomal subunit protein bL35 (63 aa).

Basic residues-rich tracts occupy residues 1–25 and 32–47; these read MPKMKSKSSAAKRFKKTANGFKHRQ and LTKKSTKRKRHLRPKK. A disordered region spans residues 1-55; sequence MPKMKSKSSAAKRFKKTANGFKHRQSFTSHILTKKSTKRKRHLRPKKQVNPSDVP.

The protein belongs to the bacterial ribosomal protein bL35 family.

The chain is Large ribosomal subunit protein bL35 from Hahella chejuensis (strain KCTC 2396).